The sequence spans 507 residues: Histidine ammonia-lyase (507 aa).

Positions 141–143 (ASG) form a cross-link, 5-imidazolinone (Ala-Gly). 2,3-didehydroalanine (Ser) is present on S142.

The protein belongs to the PAL/histidase family. In terms of processing, contains an active site 4-methylidene-imidazol-5-one (MIO), which is formed autocatalytically by cyclization and dehydration of residues Ala-Ser-Gly.

It is found in the cytoplasm. The catalysed reaction is L-histidine = trans-urocanate + NH4(+). The protein operates within amino-acid degradation; L-histidine degradation into L-glutamate; N-formimidoyl-L-glutamate from L-histidine: step 1/3. The chain is Histidine ammonia-lyase from Burkholderia ambifaria (strain ATCC BAA-244 / DSM 16087 / CCUG 44356 / LMG 19182 / AMMD) (Burkholderia cepacia (strain AMMD)).